Reading from the N-terminus, the 103-residue chain is Small ribosomal subunit protein uS10 (103 aa).

Belongs to the universal ribosomal protein uS10 family. As to quaternary structure, part of the 30S ribosomal subunit.

Functionally, involved in the binding of tRNA to the ribosomes. This Borrelia duttonii (strain Ly) protein is Small ribosomal subunit protein uS10.